Here is a 347-residue protein sequence, read N- to C-terminus: Circulating cathodic antigen (347 aa).

Residues Ile76 to Ile109 adopt a coiled-coil conformation. Residues Pro149–Asp177 form a disordered region. Residues Ser153–Gly174 are compositionally biased toward polar residues. Positions Asp206–Ser233 form a coiled coil. Residues Leu303–Asp332 are disordered. Over residues Pro307 to Ser316 the composition is skewed to low complexity.

Belongs to the SIKE family. In terms of processing, O-glycosylated.

Its function is as follows. Involved in protection of the schistosome gut. In Schistosoma mansoni (Blood fluke), this protein is Circulating cathodic antigen.